The following is a 1039-amino-acid chain: Protein male-specific lethal-1 (1039 aa).

Residues 1–13 (MDKRFKWPPKKRA) show a composition bias toward basic residues. 2 disordered regions span residues 1-44 (MDKR…HLHQ) and 171-199 (RRKNQRRNDNDDDDDDPPLPPAAPQQKLI). S18 bears the Phosphoserine mark. S238 carries the phosphoserine modification. Disordered regions lie at residues 244–266 (HAGAVTNQPASKRSESKGRGEFN), 358–454 (GQSV…GNQN), 485–691 (KKDK…EIDV), and 729–799 (IYPP…SSTT). The segment covering 255–266 (KRSESKGRGEFN) has biased composition (basic and acidic residues). A compositionally biased stretch (acidic residues) spans 368–392 (EEDDDEDDEDDENSDKDDDSEEDDY). The segment covering 397-407 (SDADVNARTEE) has biased composition (basic and acidic residues). The segment covering 431-445 (AHSTPNHQQKSSTQA) has biased composition (polar residues). Residue S433 is modified to Phosphoserine. A Phosphothreonine modification is found at T434. Residues S492 and S496 each carry the phosphoserine modification. Composition is skewed to basic and acidic residues over residues 504–515 (PHQEDAIVDHNA) and 523–570 (PKPD…DAPK). Polar residues-rich tracts occupy residues 581-592 (TKTSSRESTLPK) and 609-625 (NHQSTKTQTDPVKTQRL). Position 585 is a phosphoserine (S585). Position 659 is a phosphothreonine (T659). S682 and S684 each carry phosphoserine. T747 is modified (phosphothreonine). S749 carries the post-translational modification Phosphoserine. 3 positions are modified to phosphothreonine: T750, T751, and T753. The segment covering 759–768 (QHAVTSSMDQ) has biased composition (polar residues). Residues S764 and S765 each carry the phosphoserine modification. Phosphothreonine is present on T788. Position 810 is a phosphoserine (S810). Residues T813 and T832 each carry the phosphothreonine modification. In terms of domain architecture, PEHE spans 865-983 (SLEIPKWRDV…EARDDFGVPW (119 aa)). A phosphoserine mark is found at S879 and S889. Residues 886-904 (ELLSDATFERRHQKYVKDE) form an interaction with mof HAT domain region. Residues 1011 to 1039 (IPTTAAEARHQENHSSYVFPKRRKRQKNR) are disordered. Phosphothreonine is present on T1014. Residue S1025 is modified to Phosphoserine. The span at 1030–1039 (PKRRKRQKNR) shows a compositional bias: basic residues. The Nuclear localization signal motif lies at 1032–1037 (RRKRQK).

This sequence belongs to the msl-1 family. Component of the male-specific lethal (MSL) histone acetyltransferase complex, composed of mof, mle, msl-1, msl-2 and msl-3 proteins, as well as roX1 and roX2 non-coding RNAs. Interacts (via PEHE domain) with mof (via HAT domain) and msl-3 (via MRG domain); both interactions are direct. Interacts with tamo via the nuclear localization signal. Component of a maternal MSL subcomplex composed of mof, msl-1 and msl-3. Phosphorylation at Ser-18, Thr743, Thr-747 and Thr-751 is required to promote phosphorylation of 'Ser-5' of the C-terminal heptapeptide repeat domain (CTD) of the largest RNA polymerase II subunit Polr2A. Phosphorylated by Cdk7 in vitro. In contrast, phosphorylation at Ser-18, Thr743, Thr-747 and Thr-751 does not affect its role in dosage compensation in males. In terms of processing, ubiquitinated by msl-2.

The protein localises to the nucleus. Its subcellular location is the chromosome. In terms of biological role, component of the male-specific lethal (MSL) histone acetyltransferase complex, a multiprotein complex essential for elevating transcription of the single X chromosome in the male (X chromosome dosage compensation). The MSL complex specifically associates with the single X chromosome in males and mediates formation of H4K16ac, promoting a two-fold activation of X chromosome. In complex with msl-2, promotes ubiquitination of histone H2B. In addition to its role in dosage compensation in males, regulates the activity of gene promoters: acts together with Cdk7 to promote phosphorylation of 'Ser-5' of the C-terminal heptapeptide repeat domain (CTD) of the largest RNA polymerase II subunit Polr2A. The sequence is that of Protein male-specific lethal-1 from Drosophila melanogaster (Fruit fly).